A 156-amino-acid chain; its full sequence is Arginine repressor (156 aa).

The protein belongs to the ArgR family.

It is found in the cytoplasm. It functions in the pathway amino-acid biosynthesis; L-arginine biosynthesis [regulation]. Functionally, regulates arginine biosynthesis genes. The chain is Arginine repressor from Tolumonas auensis (strain DSM 9187 / NBRC 110442 / TA 4).